Here is a 738-residue protein sequence, read N- to C-terminus: MEVCNCIEPQWPADELLMKYQYISDFFIAIAYFSIPLELIYFVKKSAVFPYRWVLVQFGAFIVLCGATHLINLWTFTTHSRTVALVMTTAKVLTAVVSCATALMLVHIIPDLLSVKTRELFLKNKAAELDREMGLIRTQEETGRHVRMLTHEIRSTLDRHTILKTTLVELGRTLALEECALWMPTRTGLELQLSYTLRHQHPVEYTVPIQLPVINQVFGTSRAVKISPNSPVARLRPVSGKYMLGEVVAVRVPLLHLSNFQINDWPELSTKRYALMVLMLPSDSARQWHVHELELVEVVADQVAVALSHAAILEESMRARDLLMEQNVALDLARREAETAIRARNDFLAVMNHEMRTPMHAIIALSSLLQETELTPEQRLMVETILKSSNLLATLMNDVLDLSRLEDGSLQLELGTFNLHTLFREVLNLIKPIAVVKKLPITLNLAPDLPEFVVGDEKRLMQIILNIVGNAVKFSKQGSISVTALVTKSDTRAADFFVVPTGSHFYLRVKVKDSGAGINPQDIPKIFTKFAQTQSLATRSSGGSGLGLAISKRFVNLMEGNIWIESDGLGKGCTAIFDVKLGISERSNESKQSGIPKVPAIPRHSNFTGLKVLVMDENGVSRMVTKGLLVHLGCEVTTVSSNEECLRVVSHEHKVVFMDVCMPGVENYQIALRIHEKFTKQRHQRPLLVALSGNTDKSTKEKCMSFGLDGVLLKPVSLDNIRDVLSDLLEPRVLYEGM.

The next 3 helical transmembrane spans lie at 23-43, 53-73, and 92-112; these read ISDF…IYFV, WVLV…LINL, and VLTA…IPDL. Cu cation contacts are provided by Cys65 and His69. The 150-residue stretch at 158–307 folds into the GAF domain; sequence DRHTILKTTL…VVADQVAVAL (150 aa). One can recognise a Histidine kinase domain in the interval 350-585; the sequence is VMNHEMRTPM…IFDVKLGISE (236 aa). Phosphohistidine; by autocatalysis is present on His353. ADP-binding positions include 470–473, Asp513, Lys529, Ser544, and Leu548; that span reads NAVK. One can recognise a Response regulatory domain in the interval 611–729; the sequence is KVLVMDENGV…NIRDVLSDLL (119 aa). Asp659 is modified (4-aspartylphosphate). Residue Lys714 forms a Glycyl lysine isopeptide (Lys-Gly) (interchain with G-Cter in ubiquitin) linkage.

It belongs to the ethylene receptor family. Homodimer; disulfide-linked. Heteromer with ERS1, ERS2, ETR2 and EIN4. Interacts with AHP1, AHP2 and AHP3. Interacts with RTE1. Interacts with EIN2. Requires Cu cation as cofactor. Autophosphorylated. Phosphorylation at His-353 modulates the interaction with EIN2. In terms of tissue distribution, leaves, roots, stems, seedlings, flowers, anthers, carpels and ovules.

The protein resides in the endoplasmic reticulum membrane. It carries out the reaction ATP + protein L-histidine = ADP + protein N-phospho-L-histidine.. In terms of biological role, ethylene receptor related to bacterial two-component regulators. Acts as a redundant negative regulator of ethylene signaling. In the presence of ethylene, the auto-kinase activity of ETR1 is inhibited and the non-phosphorylated kinase domain binds tightly to the corresponding domain of EIN2. The polypeptide is Ethylene receptor 1 (Arabidopsis thaliana (Mouse-ear cress)).